We begin with the raw amino-acid sequence, 226 residues long: PKHD-type hydroxylase PSPA7_5129 (226 aa).

Residues 78-178 (KVFPPLFNCY…RYASFFWTQS (101 aa)) form the Fe2OG dioxygenase domain. His96, Asp98, and His159 together coordinate Fe cation. Arg169 is a binding site for 2-oxoglutarate.

Requires Fe(2+) as cofactor. L-ascorbate is required as a cofactor.

In Pseudomonas paraeruginosa (strain DSM 24068 / PA7) (Pseudomonas aeruginosa (strain PA7)), this protein is PKHD-type hydroxylase PSPA7_5129.